A 749-amino-acid chain; its full sequence is Amyloid-beta A4 precursor protein-binding family A member 2 (749 aa).

Disordered regions lie at residues 1 to 94 (MAHQ…PEEE) and 130 to 343 (DTDE…NNIP). A Phosphoserine modification is found at Ser-11. The segment covering 70–80 (GDSSSDYVNNT) has biased composition (polar residues). Composition is skewed to acidic residues over residues 81–94 (SEEEDYDEGLPEEE) and 131–142 (TDECQEAVEEWT). The interval 185–270 (HYCASKEGYQ…SAEACPPIKA (86 aa)) is STXBP1-binding. A Phosphoserine modification is found at Ser-208. Over residues 218-227 (DLEDQEEDID) the composition is skewed to acidic residues. The span at 237–247 (LSMTSITSASE) shows a compositional bias: polar residues. The segment covering 305–315 (RTPEERPKWPH) has biased composition (basic and acidic residues). A PID domain is found at 366 to 555 (LIDGIIFAAN…IINTQEMYND (190 aa)). PDZ domains follow at residues 568 to 653 (ELQL…NIVS) and 659 to 735 (TVLI…MPAA).

Part of a multimeric complex containing STXBP1 and syntaxin-1. Binds to the cytoplasmic domain of amyloid-beta protein, and to the nuclear factor NF-kappa-B/p65 via its PDZ domain. Interacts with the N-terminal domain of NECAB3.

Functionally, putative function in synaptic vesicle exocytosis by binding to STXBP1, an essential component of the synaptic vesicle exocytotic machinery. May modulate processing of the amyloid-beta precursor protein (APP) and hence formation of APP-beta. The sequence is that of Amyloid-beta A4 precursor protein-binding family A member 2 (APBA2) from Pongo abelii (Sumatran orangutan).